The primary structure comprises 211 residues: MALGLIGKKVGMTRLFDQESGAMVPVTVIDVKGNTFAQIKTEDKDGYNAIQVAFDAQKESRVAKPQAGHFKKLGIQPTKLLKEFRVEASELPAEGAKDPGVDLFSAGQWVDVIGTSKGKGFQGAMRRHNFHGSPAAHGSMMHRRTGGVGGCSTPGRVWKNQKMPGQMGNAKRTVQNLKVVAVRPEDNVILISGAVPGARGSYLVIRPAKKK.

This sequence belongs to the universal ribosomal protein uL3 family. As to quaternary structure, part of the 50S ribosomal subunit. Forms a cluster with proteins L14 and L19.

Functionally, one of the primary rRNA binding proteins, it binds directly near the 3'-end of the 23S rRNA, where it nucleates assembly of the 50S subunit. This Akkermansia muciniphila (strain ATCC BAA-835 / DSM 22959 / JCM 33894 / BCRC 81048 / CCUG 64013 / CIP 107961 / Muc) protein is Large ribosomal subunit protein uL3.